The primary structure comprises 300 residues: MEANIINGKAIAEDITGTLATCINDLKLQYSLVPCLIVVLVGDDPASHLYVRNKQRKAEMLGLRSETILLPSTTSESSLIDKIHELNNDDNVHGILVQLPVPKHIDKNLIINTIDPRKDVDGFHNDNVGRLFTGQKRNCLIPCTPRGCLYLIKTVTHNLSGSDAVVIGRSNIVGKPMACLLLGENCTVTTVHSATRNLSDYCSKADILVAAVGIPNFVKSSWIKPGAIVIDVGINSVEEDGVKKFVGDVNFAEAKNVASAITPVPGGVGPMTIAFLMVNTVMAACNQSGIENFVEKYLDL.

Residues 168 to 170 (GRS), serine 193, and isoleucine 234 contribute to the NADP(+) site.

Belongs to the tetrahydrofolate dehydrogenase/cyclohydrolase family. In terms of assembly, homodimer.

It carries out the reaction (6R)-5,10-methylene-5,6,7,8-tetrahydrofolate + NADP(+) = (6R)-5,10-methenyltetrahydrofolate + NADPH. It catalyses the reaction (6R)-5,10-methenyltetrahydrofolate + H2O = (6R)-10-formyltetrahydrofolate + H(+). Its pathway is one-carbon metabolism; tetrahydrofolate interconversion. Catalyzes the oxidation of 5,10-methylenetetrahydrofolate to 5,10-methenyltetrahydrofolate and then the hydrolysis of 5,10-methenyltetrahydrofolate to 10-formyltetrahydrofolate. This Ehrlichia canis (strain Jake) protein is Bifunctional protein FolD.